We begin with the raw amino-acid sequence, 373 residues long: 4-hydroxy-3-methylbut-2-en-1-yl diphosphate synthase (flavodoxin) (373 aa).

4 residues coordinate [4Fe-4S] cluster: C270, C273, C305, and E312.

It belongs to the IspG family. Requires [4Fe-4S] cluster as cofactor.

The enzyme catalyses (2E)-4-hydroxy-3-methylbut-2-enyl diphosphate + oxidized [flavodoxin] + H2O + 2 H(+) = 2-C-methyl-D-erythritol 2,4-cyclic diphosphate + reduced [flavodoxin]. It functions in the pathway isoprenoid biosynthesis; isopentenyl diphosphate biosynthesis via DXP pathway; isopentenyl diphosphate from 1-deoxy-D-xylulose 5-phosphate: step 5/6. In terms of biological role, converts 2C-methyl-D-erythritol 2,4-cyclodiphosphate (ME-2,4cPP) into 1-hydroxy-2-methyl-2-(E)-butenyl 4-diphosphate. The chain is 4-hydroxy-3-methylbut-2-en-1-yl diphosphate synthase (flavodoxin) from Photobacterium profundum (strain SS9).